The following is a 369-amino-acid chain: Serine proteinase inhibitor 1 (369 aa).

Belongs to the serpin family. Poxviruses subfamily.

Functionally, important in virulence. In Oryctolagus cuniculus (Rabbit), this protein is Serine proteinase inhibitor 1 (SPI-1).